We begin with the raw amino-acid sequence, 428 residues long: Phosphoribosylamine--glycine ligase (428 aa).

The ATP-grasp domain occupies 109–316 (KDFLARHNIP…LVELCLAGTQ (208 aa)). Position 135 to 196 (135 to 196 (VRQKGAPIVI…EEFLDGEEAS (62 aa))) interacts with ATP. Mg(2+)-binding residues include Glu-286 and Asn-288.

It belongs to the GARS family. It depends on Mg(2+) as a cofactor. Mn(2+) is required as a cofactor.

The enzyme catalyses 5-phospho-beta-D-ribosylamine + glycine + ATP = N(1)-(5-phospho-beta-D-ribosyl)glycinamide + ADP + phosphate + H(+). Its pathway is purine metabolism; IMP biosynthesis via de novo pathway; N(1)-(5-phospho-D-ribosyl)glycinamide from 5-phospho-alpha-D-ribose 1-diphosphate: step 2/2. This is Phosphoribosylamine--glycine ligase from Yersinia pestis.